Reading from the N-terminus, the 176-residue chain is Ribosome maturation factor RimM (176 aa).

The PRC barrel domain maps to 94-176; sequence KDEFFYFEIL…RFGFEILQNS (83 aa).

The protein belongs to the RimM family. In terms of assembly, binds ribosomal protein uS19.

It localises to the cytoplasm. Its function is as follows. An accessory protein needed during the final step in the assembly of 30S ribosomal subunit, possibly for assembly of the head region. Essential for efficient processing of 16S rRNA. May be needed both before and after RbfA during the maturation of 16S rRNA. It has affinity for free ribosomal 30S subunits but not for 70S ribosomes. The polypeptide is Ribosome maturation factor RimM (Campylobacter hominis (strain ATCC BAA-381 / DSM 21671 / CCUG 45161 / LMG 19568 / NCTC 13146 / CH001A)).